A 240-amino-acid polypeptide reads, in one-letter code: Uridylate kinase (240 aa).

Residue 12-15 (KLSG) coordinates ATP. Positions 20–25 (GEQGFG) are involved in allosteric activation by GTP. Glycine 54 is a UMP binding site. ATP-binding residues include glycine 55 and arginine 59. Residues aspartate 74 and 135–142 (TGNPYFST) each bind UMP. Residues asparagine 163, tyrosine 169, and aspartate 172 each contribute to the ATP site.

It belongs to the UMP kinase family. As to quaternary structure, homohexamer.

It is found in the cytoplasm. It carries out the reaction UMP + ATP = UDP + ADP. It functions in the pathway pyrimidine metabolism; CTP biosynthesis via de novo pathway; UDP from UMP (UMPK route): step 1/1. Its activity is regulated as follows. Allosterically activated by GTP. Inhibited by UTP. Its function is as follows. Catalyzes the reversible phosphorylation of UMP to UDP. In Bacillus anthracis, this protein is Uridylate kinase.